Consider the following 631-residue polypeptide: Nucleoside triphosphatase I (631 aa).

The region spanning 42–204 is the Helicase ATP-binding domain; it reads FLGLDTMHSI…TMIVNLLRPK (163 aa). 55–62 lines the ATP pocket; the sequence is HDTGVGKT. A DEXH box motif is present at residues 141 to 144; it reads DECH. Positions 367-536 constitute a Helicase C-terminal domain; that stretch reads KFTEVCLKIL…LFKVFKESSI (170 aa). Positions 457 to 524 are binding to the cap-specific mRNA (nucleoside-2'-O-)-methyltransferase; it reads DIFILDMTWN…NIIKTKSKEF (68 aa).

It belongs to the helicase family. NPH I subfamily. In terms of assembly, monomer. Interacts (via C-terminus) with RAP94 (via N-terminus). Interacts with the cap-specific mRNA (nucleoside-2'-O-)-methyltransferase.

The protein resides in the virion. It carries out the reaction a ribonucleoside 5'-triphosphate + H2O = a ribonucleoside 5'-diphosphate + phosphate + H(+). In terms of biological role, DNA-dependent ATPase required for providing the needed energy to achieve the termination of early transcripts. Acts in concert with the RAP94 subunit of the virion RNA polymerase and the capping enzyme/VTF to catalyze release of UUUUUNU-containing nascent RNA from the elongation complex. NPH-I must bind ssDNA in order to exhibit ATPase activity. The polypeptide is Nucleoside triphosphatase I (NPH1) (Erythrocebus patas (Red guenon)).